The sequence spans 183 residues: Capsid protein (183 aa).

Residues 136 to 183 (NAPILSTLPETTVVRRRGRSPRRRTPSPRRRRSQSPRRRRSQSRESQC) are disordered. The segment covering 149–176 (VRRRGRSPRRRTPSPRRRRSQSPRRRRS) has biased composition (basic residues). Phosphoserine; by host is present on residues Ser155, Ser162, and Ser170. Residues 155 to 161 (SPRRRTP) form a 1; half-length repeat. The interval 155 to 177 (SPRRRTPSPRRRRSQSPRRRRSQ) is 3 X 8 AA repeats of S-P-R-R-R-[PR]-S-Q. Positions 158-175 (RRTPSPRRRRSQSPRRRR) match the Bipartite nuclear localization signal motif. Repeat copies occupy residues 162-169 (SPRRRRSQ) and 170-177 (SPRRRRSQ). The tract at residues 177 to 183 (QSRESQC) is RNA binding.

Belongs to the orthohepadnavirus core antigen family. Homodimerizes, then multimerizes. Interacts with cytosol exposed regions of viral L glycoprotein present in the reticulum-to-Golgi compartment. Interacts with human FLNB. Phosphorylated form interacts with host importin alpha; this interaction depends on the exposure of the NLS, which itself depends upon genome maturation and/or phosphorylation of the capsid protein. Interacts with host NUP153. Phosphorylated by host SRPK1, SRPK2, and maybe protein kinase C or GAPDH. Phosphorylation is critical for pregenomic RNA packaging. Protein kinase C phosphorylation is stimulated by HBx protein and may play a role in transport of the viral genome to the nucleus at the late step during the viral replication cycle.

It localises to the virion. Its subcellular location is the host cytoplasm. In terms of biological role, self assembles to form an icosahedral capsid. Most capsids appear to be large particles with an icosahedral symmetry of T=4 and consist of 240 copies of capsid protein, though a fraction forms smaller T=3 particles consisting of 180 capsid proteins. Entering capsids are transported along microtubules to the nucleus. Phosphorylation of the capsid is thought to induce exposure of nuclear localization signal in the C-terminal portion of the capsid protein that allows binding to the nuclear pore complex via the importin (karyopherin-) alpha and beta. Capsids are imported in intact form through the nuclear pore into the nuclear basket, where it probably binds NUP153. Only capsids that contain the mature viral genome can release the viral DNA and capsid protein into the nucleoplasm. Immature capsids get stuck in the basket. Capsids encapsulate the pre-genomic RNA and the P protein. Pre-genomic RNA is reverse-transcribed into DNA while the capsid is still in the cytoplasm. The capsid can then either be directed to the nucleus, providing more genomes for transcription, or bud through the endoplasmic reticulum to provide new virions. The sequence is that of Capsid protein from Hepatitis B virus genotype B2 (isolate Indonesia/pIDW420/1988) (HBV-B).